Here is a 461-residue protein sequence, read N- to C-terminus: Argininosuccinate lyase (461 aa).

Belongs to the lyase 1 family. Argininosuccinate lyase subfamily.

The protein resides in the cytoplasm. It carries out the reaction 2-(N(omega)-L-arginino)succinate = fumarate + L-arginine. It functions in the pathway amino-acid biosynthesis; L-arginine biosynthesis; L-arginine from L-ornithine and carbamoyl phosphate: step 3/3. Its activity is regulated as follows. Strongly inhibited by L-arginine. Inhibitory effects are lowered at pH 7.0 compared to those at pH 8.0. At 45 degrees Celsius and pH 8.0, activity decreases to 94%, 74% and 37% in the presence of 0.6 mM, 2.8 mM and 10 mM arginine, respectively. Activity also decreases to 86% in the presence of 10 mM sodium succinate or sodium citrate. Activity does not decrease in the presence of 1 mM or 10 mM L-lysine, which has a similar structure to arginine. In terms of biological role, catalyzes the last step of arginine biosynthesis, the conversion of argininosuccinate into L-arginine and fumarate. In Synechocystis sp. (strain ATCC 27184 / PCC 6803 / Kazusa), this protein is Argininosuccinate lyase.